The following is a 149-amino-acid chain: Oligosaccharyltransferase complex subunit ostc (149 aa).

At 1 to 32 (MESLYRVPFTVLECPNLKLKKPSWLHMPSAMT) the chain is on the cytoplasmic side. A helical transmembrane segment spans residues 33 to 53 (VYAMVVVSYFLITGGIIYDVI). The Extracellular portion of the chain corresponds to 54–83 (VEPPSVGSMTDEHGHQRPVAFLAYRVNGQY). A helical membrane pass occupies residues 84–104 (IMEGLASSFLFTMGGLGFIIL). Over 105-117 (DRSNAPNIPKLNR) the chain is Cytoplasmic. The helical transmembrane segment at 118–138 (FLLLFIGFVCVLLSFFMARVF) threads the bilayer. Topologically, residues 139–149 (MRMKLPGYLMG) are extracellular.

This sequence belongs to the OSTC family. In terms of assembly, specific component of the STT3A-containing form of the oligosaccharyltransferase (OST) complex.

The protein resides in the membrane. It functions in the pathway protein modification; protein glycosylation. Specific component of the STT3A-containing form of the oligosaccharyl transferase (OST) complex that catalyzes the initial transfer of a defined glycan (Glc(3)Man(9)GlcNAc(2) in eukaryotes) from the lipid carrier dolichol-pyrophosphate to an asparagine residue within an Asn-X-Ser/Thr consensus motif in nascent polypeptide chains, the first step in protein N-glycosylation. N-glycosylation occurs cotranslationally and the complex associates with the Sec61 complex at the channel-forming translocon complex that mediates protein translocation across the endoplasmic reticulum (ER). All subunits are required for a maximal enzyme activity. This chain is Oligosaccharyltransferase complex subunit ostc, found in Xenopus tropicalis (Western clawed frog).